The chain runs to 263 residues: Protein STK_14130 (263 aa).

It belongs to the CinA family.

The sequence is that of Protein STK_14130 from Sulfurisphaera tokodaii (strain DSM 16993 / JCM 10545 / NBRC 100140 / 7) (Sulfolobus tokodaii).